Reading from the N-terminus, the 360-residue chain is tRNA (guanine(37)-N(1))-methyltransferase (360 aa).

S-adenosyl-L-methionine is bound by residues R197, 235-236 (DL), and N283.

Belongs to the class I-like SAM-binding methyltransferase superfamily. TRM5/TYW2 family. Monomer.

The protein localises to the mitochondrion matrix. The protein resides in the nucleus. It localises to the cytoplasm. It catalyses the reaction guanosine(37) in tRNA + S-adenosyl-L-methionine = N(1)-methylguanosine(37) in tRNA + S-adenosyl-L-homocysteine + H(+). Its function is as follows. Specifically methylates the N1 position of guanosine-37 in various cytoplasmic and mitochondrial tRNAs. Methylation is not dependent on the nature of the nucleoside 5' of the target nucleoside. This is the first step in the biosynthesis of wybutosine (yW), a modified base adjacent to the anticodon of tRNAs and required for accurate decoding. In Encephalitozoon cuniculi (strain GB-M1) (Microsporidian parasite), this protein is tRNA (guanine(37)-N(1))-methyltransferase.